Reading from the N-terminus, the 765-residue chain is MSNTSNFNERVTENAKPPKNVKSIIWKTIGIIIVMAIIIGLILFYVLPRNTIANISNIQYVDGNLVATATINGRSGRFILDLENSTYQTSYTSGLSLSISVFLRNLNNANGQSFFVSLIRPATSSANDAVFNIANLSINQTRGVATLVTEGGSYSAVLTTTLTALPLTGQKFLPEGFNLDTANTDAYRAAGAIPGIQRLLAVGNVQLPNQSTAILTQFLTSIIPFVILIVIYIVIARRFSRTMGAGGAIGEDGENVFTIGKSQAKLAKSTFKFTDVAGIEEEKSELIELVDYLKRPGKYVQMGARTPRGVVLYGPPGTGKTLLAKAVAGEAGVPFFQVTGSAFEDMLVGVGAKRVRNLFAKAKKAAPCIIFIDEIDSVGSKRGKYEISAGSATDQTLNQLLAEMDGFSTRTGIIVMAATNRLDVLDDALLRPGRFDRHIQVNLPDIKEREAILKIHSRNKNISSKVNLLDIARRTPGFSGAQLENVLNEATLLAVRADRTSISLTDIDEAIDRVIAGPAKKSRVISDFEKNQVAHHEAGHALVGLHLKGADEVQKITIIPRGQAGGYTLSTPKDAELNLKKKSDLLNMIAGALGGRASEELFFGKDAISTGASNDFYKATNIAKTMVTQLGMSDLGITQFLPSEGGINPNARYYSENTAQRIDEAIAKILEEQYQVAYNIIKDNQNELKLIVEALLIQETIVKNDIDYIHEHLKLPEAIIKLKEEQLKEKAAAEKEEQAEKAKLDHQSDSAQPQEEPTASTASSN.

The Cytoplasmic segment spans residues 1 to 27 (MSNTSNFNERVTENAKPPKNVKSIIWK). A helical membrane pass occupies residues 28-48 (TIGIIIVMAIIIGLILFYVLP). Residues 49-213 (RNTIANISNI…NVQLPNQSTA (165 aa)) lie on the Extracellular side of the membrane. The helical transmembrane segment at 214–234 (ILTQFLTSIIPFVILIVIYIV) threads the bilayer. The Cytoplasmic segment spans residues 235 to 765 (IARRFSRTMG…EPTASTASSN (531 aa)). 314 to 321 (GPPGTGKT) contacts ATP. His536 contacts Zn(2+). Glu537 is an active-site residue. Zn(2+) is bound by residues His540 and Asp615. Residues 730-748 (KAAAEKEEQAEKAKLDHQS) show a composition bias toward basic and acidic residues. The segment at 730–765 (KAAAEKEEQAEKAKLDHQSDSAQPQEEPTASTASSN) is disordered. Residues 749 to 765 (DSAQPQEEPTASTASSN) show a composition bias toward polar residues.

It in the central section; belongs to the AAA ATPase family. This sequence in the C-terminal section; belongs to the peptidase M41 family. As to quaternary structure, homohexamer. It depends on Zn(2+) as a cofactor.

It is found in the cell membrane. In terms of biological role, acts as a processive, ATP-dependent zinc metallopeptidase for both cytoplasmic and membrane proteins. Plays a role in the quality control of integral membrane proteins. The sequence is that of ATP-dependent zinc metalloprotease FtsH from Mycoplasmoides gallisepticum (strain R(high / passage 156)) (Mycoplasma gallisepticum).